The chain runs to 1084 residues: Myosin heavy chain, skeletal muscle (1084 aa).

3 disordered regions span residues 1-20, 270-292, and 298-317; these read SAET…KTKE, EIEA…SREL, and RLEE…KKRE. The tract at residues 1–258 is alpha-helical tailpiece (S2); that stretch reads SAETEKEMAN…SKIEDEQALM (258 aa). The rodlike tail (S2 and LMM domains) stretch occupies residues 259 to 1084; sequence TNLQRIEELE…DVHSKVISEE (826 aa). The segment covering 273–292 has biased composition (basic and acidic residues); it reads AERASRAKAEKQRSDLSREL. Residues 455–1084 adopt a coiled-coil conformation; sequence QAFTQQIEGL…DVHSKVISEE (630 aa).

Muscle myosin is a hexameric protein that consists of 2 heavy chain subunits (MHC), 2 alkali light chain subunits (MLC) and 2 regulatory light chain subunits (MLC-2).

Its subcellular location is the cytoplasm. It localises to the myofibril. Functionally, muscle contraction. This chain is Myosin heavy chain, skeletal muscle, found in Oryctolagus cuniculus (Rabbit).